A 266-amino-acid polypeptide reads, in one-letter code: Zinc transporter ZupT (266 aa).

A run of 8 helical transmembrane segments spans residues 8–28 (LALTLLAGISTGIGSLLALMV), 35–55 (FLTFALGFSAGIMLYVSFVEI), 70–90 (HAAGWITTAAFFGGMLFIWLI), 123–143 (GIFTAAAIAIHNFPEGLAVFF), 152–172 (GVVIAATIALHNIPEGMAVAV), 185–205 (FSYSFLSGLAEPLGAIIGYAL), 209–229 (FLSPLVFACVLGGVAGIMVYI), and 246–266 (IAISGLILGMGVMAVSLLMLA). Fe(2+)-binding residues include Asn134 and Glu137. Residues Glu137 and His162 each coordinate Zn(2+). Asn163, Glu166, and Glu195 together coordinate Fe(2+). A Zn(2+)-binding site is contributed by Glu166.

The protein belongs to the ZIP transporter (TC 2.A.5) family. ZupT subfamily.

It is found in the cell inner membrane. The enzyme catalyses Zn(2+)(in) = Zn(2+)(out). Its function is as follows. Mediates zinc uptake. May also transport other divalent cations. The polypeptide is Zinc transporter ZupT (Chlorobium limicola (strain DSM 245 / NBRC 103803 / 6330)).